We begin with the raw amino-acid sequence, 400 residues long: Large envelope protein (400 aa).

An N-acetylmethionine modification is found at Met1. Disordered regions lie at residues Met1 to Phe24 and Pro89 to His116. The N-myristoyl glycine; by host moiety is linked to residue Gly2. Positions Gly2–Ala119 are pre-S1. The segment at Gly2–Asn174 is pre-S. The Virion surface; in external conformation portion of the chain corresponds to Gly2–Gly181. Topologically, residues Gly2–Arg253 are intravirion; in internal conformation. Trp4 is a glycosylation site (N-linked (GlcNAc...) asparagine). A compositionally biased stretch (polar residues) spans Ser96 to Thr106. A pre-S2 region spans residues Met120–Asn174. A helical membrane pass occupies residues Phe182–Ile202. Over Pro203–Arg253 the chain is Intravirion; in external conformation. The helical transmembrane segment at Phe254–Tyr274 threads the bilayer. The Virion surface portion of the chain corresponds to Gln275–Ser348. Asn320 carries an N-linked (GlcNAc...) asparagine; by host glycan. The chain crosses the membrane as a helical span at residues Leu349 to Ile369. Over Trp370 to Trp375 the chain is Intravirion. Residues Gly376 to Val398 traverse the membrane as a helical segment. Topologically, residues Tyr399–Ile400 are virion surface.

Belongs to the orthohepadnavirus major surface antigen family. In terms of assembly, in its internal form (Li-HBsAg), interacts with the capsid protein and with the isoform S. Interacts with host chaperone CANX. As to quaternary structure, associates with host chaperone CANX through its pre-S2 N glycan; this association may be essential for isoform M proper secretion. Interacts with isoform L. Interacts with the antigens of satellite virus HDV (HDVAgs); this interaction is required for encapsidation of HDV genomic RNA. In terms of processing, isoform M is N-terminally acetylated by host at a ratio of 90%, and N-glycosylated by host at the pre-S2 region. Post-translationally, myristoylated.

Its subcellular location is the virion membrane. Functionally, the large envelope protein exists in two topological conformations, one which is termed 'external' or Le-HBsAg and the other 'internal' or Li-HBsAg. In its external conformation the protein attaches the virus to cell receptors and thereby initiating infection. This interaction determines the species specificity and liver tropism. This attachment induces virion internalization predominantly through caveolin-mediated endocytosis. The large envelope protein also assures fusion between virion membrane and endosomal membrane. In its internal conformation the protein plays a role in virion morphogenesis and mediates the contact with the nucleocapsid like a matrix protein. The middle envelope protein plays an important role in the budding of the virion. It is involved in the induction of budding in a nucleocapsid independent way. In this process the majority of envelope proteins bud to form subviral lipoprotein particles of 22 nm of diameter that do not contain a nucleocapsid. The sequence is that of Large envelope protein from Hepatitis B virus genotype A1 subtype adw (isolate Philippines/pFDW294/1988) (HBV-A).